The chain runs to 33 residues: Protamine TP17 (33 aa).

Residues 1-33 (MPRRRRSSSRPVRRRRRPRVSRRRRRRGRRRRR) are disordered.

As to expression, testis.

The protein localises to the nucleus. It is found in the chromosome. Protamines substitute for histones in the chromatin of sperm during the haploid phase of spermatogenesis. They compact sperm DNA into a highly condensed, stable and inactive complex. The sequence is that of Protamine TP17 from Oncorhynchus mykiss (Rainbow trout).